We begin with the raw amino-acid sequence, 442 residues long: Divalent metal cation transporter MntH (442 aa).

Helical transmembrane passes span 29-49, 62-82, 106-126, 135-155, 166-186, 209-229, 258-278, 295-315, 347-367, 372-392, and 413-433; these read MLAY…PGNW, TLLT…SLCV, FCLW…ELLG, FVIP…VLLF, ALVI…ILFS, MLYI…LYLH, FALS…AATF, LLSP…ALLA, LITR…FGEN, LIVL…IPLV, and LAWL…LQSL.

This sequence belongs to the NRAMP family.

The protein resides in the cell inner membrane. H(+)-stimulated, divalent metal cation uptake system. The polypeptide is Divalent metal cation transporter MntH (Nostoc sp. (strain PCC 7120 / SAG 25.82 / UTEX 2576)).